The following is a 322-amino-acid chain: CXXC-type zinc finger protein 5 (322 aa).

Positions 1 to 10 (MSSLGGGSQD) are enriched in gly residues. Residues 1 to 100 (MSSLGGGSQD…SGGGSMMGGE (100 aa)) form a disordered region. Low complexity-rich tracts occupy residues 11–20 (AGGSSSSSTN) and 28–52 (SGPKAGAADKSAVVAAATPASVADD). At Thr53 the chain carries Phosphothreonine. Residues 87–97 (SSGGSGGGSMM) are compositionally biased toward gly residues. The CXXC-type zinc finger occupies 256-297 (GKKKRKRCGMCAPCRRRINCEQCSSCRNRKTGHQICKFRKCE). Residues 257-262 (KKKRKR) carry the Nuclear localization signal motif. Zn(2+) is bound by residues Cys263, Cys266, Cys269, Cys275, Cys278, Cys281, Cys291, and Cys296.

Interacts with DVL1. Interacts with RBPJ.

Its subcellular location is the nucleus. The protein resides in the cytoplasm. Its function is as follows. May indirectly participate in activation of the NF-kappa-B and MAPK pathways. Acts as a mediator of BMP4-mediated modulation of canonical Wnt signaling activity in neural stem cells. Required for DNA damage-induced ATM phosphorylation, p53 activation and cell cycle arrest. Involved in myelopoiesis. Binds to the oxygen responsive element of COX4I2 and represses its transcription under hypoxia conditions (4% oxygen), as well as normoxia conditions (20% oxygen). May repress COX4I2 transactivation induced by CHCHD2 and RBPJ. Binds preferentially to DNA containing cytidine-phosphate-guanosine (CpG) dinucleotides over CpH (H=A, T, and C), hemimethylated-CpG and hemimethylated-hydroxymethyl-CpG. The protein is CXXC-type zinc finger protein 5 (CXXC5) of Pongo abelii (Sumatran orangutan).